We begin with the raw amino-acid sequence, 288 residues long: ATP phosphoribosyltransferase (288 aa).

It belongs to the ATP phosphoribosyltransferase family. Long subfamily. Mg(2+) is required as a cofactor.

It is found in the cytoplasm. It carries out the reaction 1-(5-phospho-beta-D-ribosyl)-ATP + diphosphate = 5-phospho-alpha-D-ribose 1-diphosphate + ATP. The protein operates within amino-acid biosynthesis; L-histidine biosynthesis; L-histidine from 5-phospho-alpha-D-ribose 1-diphosphate: step 1/9. Its activity is regulated as follows. Feedback inhibited by histidine. Its function is as follows. Catalyzes the condensation of ATP and 5-phosphoribose 1-diphosphate to form N'-(5'-phosphoribosyl)-ATP (PR-ATP). Has a crucial role in the pathway because the rate of histidine biosynthesis seems to be controlled primarily by regulation of HisG enzymatic activity. In Methanococcus maripaludis (strain C5 / ATCC BAA-1333), this protein is ATP phosphoribosyltransferase.